The following is a 91-amino-acid chain: Elongation factor 1-beta (91 aa).

The protein belongs to the EF-1-beta/EF-1-delta family.

Functionally, promotes the exchange of GDP for GTP in EF-1-alpha/GDP, thus allowing the regeneration of EF-1-alpha/GTP that could then be used to form the ternary complex EF-1-alpha/GTP/AAtRNA. The protein is Elongation factor 1-beta of Caldivirga maquilingensis (strain ATCC 700844 / DSM 13496 / JCM 10307 / IC-167).